Reading from the N-terminus, the 247-residue chain is 5'-nucleotidase SurE (247 aa).

The a divalent metal cation site is built by aspartate 8, aspartate 9, serine 39, and asparagine 91.

This sequence belongs to the SurE nucleotidase family. A divalent metal cation is required as a cofactor.

Its subcellular location is the cytoplasm. It carries out the reaction a ribonucleoside 5'-phosphate + H2O = a ribonucleoside + phosphate. Functionally, nucleotidase that shows phosphatase activity on nucleoside 5'-monophosphates. This Nitrosomonas europaea (strain ATCC 19718 / CIP 103999 / KCTC 2705 / NBRC 14298) protein is 5'-nucleotidase SurE.